Here is a 419-residue protein sequence, read N- to C-terminus: UDP-N-acetylglucosamine 1-carboxyvinyltransferase (419 aa).

22-23 (KN) contributes to the phosphoenolpyruvate binding site. Position 95 (Arg95) interacts with UDP-N-acetyl-alpha-D-glucosamine. The active-site Proton donor is Cys119. The residue at position 119 (Cys119) is a 2-(S-cysteinyl)pyruvic acid O-phosphothioketal. Residues Asp308 and Ile330 each coordinate UDP-N-acetyl-alpha-D-glucosamine.

Belongs to the EPSP synthase family. MurA subfamily.

It is found in the cytoplasm. The catalysed reaction is phosphoenolpyruvate + UDP-N-acetyl-alpha-D-glucosamine = UDP-N-acetyl-3-O-(1-carboxyvinyl)-alpha-D-glucosamine + phosphate. It functions in the pathway cell wall biogenesis; peptidoglycan biosynthesis. Its function is as follows. Cell wall formation. Adds enolpyruvyl to UDP-N-acetylglucosamine. The protein is UDP-N-acetylglucosamine 1-carboxyvinyltransferase of Rickettsia bellii (strain OSU 85-389).